Here is a 115-residue protein sequence, read N- to C-terminus: Probable 4-amino-4-deoxy-L-arabinose-phosphoundecaprenol flippase subunit ArnE (115 aa).

Transmembrane regions (helical) follow at residues 42–62, 65–85, and 93–112; these read PWPWLALLALGLGLACWLLLL, VEVGSAYPMLALNFVLVTLVA, and VDRRHLAGLLLIVAGVALLG. One can recognise an EamA domain in the interval 46 to 113; sequence LALLALGLGL…IVAGVALLGR (68 aa).

Belongs to the ArnE family. As to quaternary structure, heterodimer of ArnE and ArnF.

The protein resides in the cell inner membrane. It functions in the pathway bacterial outer membrane biogenesis; lipopolysaccharide biosynthesis. Its function is as follows. Translocates 4-amino-4-deoxy-L-arabinose-phosphoundecaprenol (alpha-L-Ara4N-phosphoundecaprenol) from the cytoplasmic to the periplasmic side of the inner membrane. This Pseudomonas paraeruginosa (strain DSM 24068 / PA7) (Pseudomonas aeruginosa (strain PA7)) protein is Probable 4-amino-4-deoxy-L-arabinose-phosphoundecaprenol flippase subunit ArnE.